We begin with the raw amino-acid sequence, 540 residues long: Putative rhamnogalacturonase (540 aa).

A signal peptide spans 1–23 (MGFLTLFHMAFLAVSLFVSGALA). 2 disulfide bridges follow: cysteine 53–cysteine 100 and cysteine 192–cysteine 203. A glycan (N-linked (GlcNAc...) asparagine) is linked at asparagine 89. Asparagine 368 carries an N-linked (GlcNAc...) asparagine glycan.

Belongs to the polysaccharide lyase 4 family.

The protein resides in the secreted. The catalysed reaction is Endotype eliminative cleavage of L-alpha-rhamnopyranosyl-(1-&gt;4)-alpha-D-galactopyranosyluronic acid bonds of rhamnogalacturonan I domains in ramified hairy regions of pectin leaving L-rhamnopyranose at the reducing end and 4-deoxy-4,5-unsaturated D-galactopyranosyluronic acid at the non-reducing end.. Functionally, could be a pectinolytic enzyme that hydrolyzes the alpha-L-rhamnopyranosyl-(1,4)-alpha-D-galacturonopyranosyl glycosidic linkage by beta-elimination, thereby generating oligosaccharides terminating at the non-reducing end with a hex-4-enopyranosyluronic acid residue. This chain is Putative rhamnogalacturonase (asd-1), found in Neurospora crassa (strain ATCC 24698 / 74-OR23-1A / CBS 708.71 / DSM 1257 / FGSC 987).